The following is a 455-amino-acid chain: Protein indeterminate-domain 7 (455 aa).

The disordered stretch occupies residues 1–52; it reads MMMNRDILFHQQQQQQMEENMSNLTSASGDQASVSSGNRTETSGSNINQHHQ. The span at 17–49 shows a compositional bias: polar residues; that stretch reads MEENMSNLTSASGDQASVSSGNRTETSGSNINQ. The residue at position 82 (serine 82) is a Phosphoserine. 2 C2H2-type zinc fingers span residues 92-114 and 134-164; these read FICEVCNKGFQRDQNLQLHKRGH and YVCPEPGCVHHHPSRALGDLTGIKKHFFRKH. The Nuclear localization signal signature appears at 156–163; sequence IKKHFFRK. The segment at 169-192 adopts a C2H2-type 2; degenerate zinc-finger fold; sequence WKCEKCSKKYAVQSDWKAHAKTCG. Zn(2+)-binding residues include cysteine 171, cysteine 174, histidine 187, cysteine 191, cysteine 198, cysteine 200, histidine 213, and cysteine 217. The CCHC-type 2; atypical zinc-finger motif lies at 196–219; it reads YKCDCGTLFSRRDSFITHRAFCDA. The segment at 206–218 is SHR-binding; sequence RRDSFITHRAFCD. The disordered stretch occupies residues 235–351; it reads QASNSPHHHH…PEEEERSSRS (117 aa). Composition is skewed to low complexity over residues 248-265 and 288-299; these read QQNIGFSSSSQNIISNSN and SSNPNPNGNNGN.

The protein localises to the nucleus. Probable transcription factor. The protein is Protein indeterminate-domain 7 of Arabidopsis thaliana (Mouse-ear cress).